Here is a 209-residue protein sequence, read N- to C-terminus: D-aminoacyl-tRNA deacylase 1 (209 aa).

Positions 4, 6, and 28 each coordinate Mg(2+). Residues 139–140 (GP) carry the Gly-cisPro motif, important for rejection of L-amino acids motif. Residues 142–209 (TIELESPAPG…EGDVSSEREP (68 aa)) are disordered. 2 stretches are compositionally biased toward basic and acidic residues: residues 159 to 170 (QLSKLEKQQQRK) and 181 to 194 (SSKERSAPRKEDRS). Phosphoserine is present on residues Ser-197, Ser-204, and Ser-205.

It belongs to the DTD family. As to quaternary structure, homodimer. Interacts with CDC45 and TOPBP1. Preferentially phosphorylated in cells arrested early in S phase. Phosphorylation in the C-terminus weakens the interaction with CDC45.

The protein resides in the nucleus. The protein localises to the cytoplasm. It catalyses the reaction glycyl-tRNA(Ala) + H2O = tRNA(Ala) + glycine + H(+). The enzyme catalyses a D-aminoacyl-tRNA + H2O = a tRNA + a D-alpha-amino acid + H(+). Functionally, an aminoacyl-tRNA editing enzyme that deacylates mischarged D-aminoacyl-tRNAs. Also deacylates mischarged glycyl-tRNA(Ala), protecting cells against glycine mischarging by AlaRS. Acts via tRNA-based rather than protein-based catalysis; rejects L-amino acids rather than detecting D-amino acids in the active site. By recycling D-aminoacyl-tRNA to D-amino acids and free tRNA molecules, this enzyme counteracts the toxicity associated with the formation of D-aminoacyl-tRNA entities in vivo and helps enforce protein L-homochirality. In terms of biological role, ATPase involved in DNA replication, may facilitate loading of CDC45 onto pre-replication complexes. This is D-aminoacyl-tRNA deacylase 1 (DTD1) from Bos taurus (Bovine).